A 159-amino-acid chain; its full sequence is METNYSVIFMTIINFCILVAILKHFFWDKIKGIINERQDFVDEQLLKVDEDSEKARMYLLENQRILQTAKEEGKKITESQKEKANKVYDEIVEDANEEAKSLLERAKTDIQREKEKAEYEIKKQAVDLAIELSIKALEENIDESKHRELISNFITKVGM.

The chain crosses the membrane as a helical span at residues 7-27; sequence VIFMTIINFCILVAILKHFFW.

The protein belongs to the ATPase B chain family. F-type ATPases have 2 components, F(1) - the catalytic core - and F(0) - the membrane proton channel. F(1) has five subunits: alpha(3), beta(3), gamma(1), delta(1), epsilon(1). F(0) has three main subunits: a(1), b(2) and c(10-14). The alpha and beta chains form an alternating ring which encloses part of the gamma chain. F(1) is attached to F(0) by a central stalk formed by the gamma and epsilon chains, while a peripheral stalk is formed by the delta and b chains.

It localises to the cell membrane. Its function is as follows. F(1)F(0) ATP synthase produces ATP from ADP in the presence of a proton or sodium gradient. F-type ATPases consist of two structural domains, F(1) containing the extramembraneous catalytic core and F(0) containing the membrane proton channel, linked together by a central stalk and a peripheral stalk. During catalysis, ATP synthesis in the catalytic domain of F(1) is coupled via a rotary mechanism of the central stalk subunits to proton translocation. Component of the F(0) channel, it forms part of the peripheral stalk, linking F(1) to F(0). This Clostridium botulinum (strain Alaska E43 / Type E3) protein is ATP synthase subunit b.